We begin with the raw amino-acid sequence, 565 residues long: NAD-dependent malic enzyme (565 aa).

The active-site Proton donor is tyrosine 104. Position 157 (arginine 157) interacts with NAD(+). Residue lysine 175 is the Proton acceptor of the active site. 3 residues coordinate a divalent metal cation: glutamate 246, aspartate 247, and aspartate 270. The NAD(+) site is built by aspartate 270 and asparagine 418.

It belongs to the malic enzymes family. In terms of assembly, homotetramer. The cofactor is Mg(2+). It depends on Mn(2+) as a cofactor.

It carries out the reaction (S)-malate + NAD(+) = pyruvate + CO2 + NADH. The catalysed reaction is oxaloacetate + H(+) = pyruvate + CO2. This is NAD-dependent malic enzyme from Salmonella newport (strain SL254).